The primary structure comprises 180 residues: Putative pre-16S rRNA nuclease (180 aa).

A compositionally biased stretch (basic and acidic residues) spans 1–12 (MDAQERSERPDP). The tract at residues 1 to 23 (MDAQERSERPDPATDPGRGRRLG) is disordered.

The protein belongs to the YqgF nuclease family.

It is found in the cytoplasm. Its function is as follows. Could be a nuclease involved in processing of the 5'-end of pre-16S rRNA. This Nocardia farcinica (strain IFM 10152) protein is Putative pre-16S rRNA nuclease.